The following is a 679-amino-acid chain: UvrABC system protein B (679 aa).

The region spanning 25–176 (YGVNQGKQYQ…NVRESLRELV (152 aa)) is the Helicase ATP-binding domain. 38–45 (GATGTGKT) is an ATP binding site. Positions 91–114 (YYDYYQPEAYVPVSDTYIAKTSSV) match the Beta-hairpin motif. The region spanning 429–591 (QIDDLLDEIR…IIPKPAGKKP (163 aa)) is the Helicase C-terminal domain. The UVR domain occupies 639 to 674 (PEIIDKLEGKMNLAAEELDFEQAAKLRDRIRQLRKK).

This sequence belongs to the UvrB family. As to quaternary structure, forms a heterotetramer with UvrA during the search for lesions. Interacts with UvrC in an incision complex.

The protein localises to the cytoplasm. Functionally, the UvrABC repair system catalyzes the recognition and processing of DNA lesions. A damage recognition complex composed of 2 UvrA and 2 UvrB subunits scans DNA for abnormalities. Upon binding of the UvrA(2)B(2) complex to a putative damaged site, the DNA wraps around one UvrB monomer. DNA wrap is dependent on ATP binding by UvrB and probably causes local melting of the DNA helix, facilitating insertion of UvrB beta-hairpin between the DNA strands. Then UvrB probes one DNA strand for the presence of a lesion. If a lesion is found the UvrA subunits dissociate and the UvrB-DNA preincision complex is formed. This complex is subsequently bound by UvrC and the second UvrB is released. If no lesion is found, the DNA wraps around the other UvrB subunit that will check the other stand for damage. This is UvrABC system protein B from Prochlorococcus marinus (strain MIT 9211).